Reading from the N-terminus, the 297-residue chain is tRNA pseudouridine synthase B (297 aa).

Aspartate 44 (nucleophile) is an active-site residue.

Belongs to the pseudouridine synthase TruB family. Type 1 subfamily.

It catalyses the reaction uridine(55) in tRNA = pseudouridine(55) in tRNA. Its function is as follows. Responsible for synthesis of pseudouridine from uracil-55 in the psi GC loop of transfer RNAs. The polypeptide is tRNA pseudouridine synthase B (Mycobacterium sp. (strain JLS)).